The following is a 34-amino-acid chain: uncharacterized protein (34 aa).

This is an uncharacterized protein from Haemophilus influenzae (strain ATCC 51907 / DSM 11121 / KW20 / Rd).